The primary structure comprises 356 residues: Glutamine synthetase (356 aa).

The 80-residue stretch at 26–105 (IMAEYVWVDA…VLAECWNAGG (80 aa)) folds into the GS beta-grasp domain. The GS catalytic domain occupies 112-356 (FRHDCVKVMD…TKALLQFSLA (245 aa)).

Belongs to the glutamine synthetase family. In terms of assembly, homooctamer.

It localises to the cytoplasm. It carries out the reaction L-glutamate + NH4(+) + ATP = L-glutamine + ADP + phosphate + H(+). In Fusarium solani subsp. phaseoli (Nectria haematococca), this protein is Glutamine synthetase (GLN1).